A 385-amino-acid polypeptide reads, in one-letter code: Multidrug resistance protein MdtE (385 aa).

The N-terminal stretch at 1-20 is a signal peptide; the sequence is MNRRRKLLIPLLFCGAMLTA. A lipid anchor (N-palmitoyl cysteine) is attached at cysteine 21. Cysteine 21 is lipidated: S-diacylglycerol cysteine.

Belongs to the membrane fusion protein (MFP) (TC 8.A.1) family. As to quaternary structure, homotrimer. Part of the tripartite efflux system MdtEF-TolC, which is composed of an inner membrane transporter, MdtF, a membrane fusion protein, MdtE, and an outer membrane component, TolC. The complex forms a large protein conduit and can translocate molecules across both the inner and outer membranes.

Its subcellular location is the cell inner membrane. Functionally, part of the tripartite efflux system MdtEF-TolC, which confers resistance to compounds such as rhodamine 6G, erythromycin, doxorubicin, ethidium bromide, TPP, SDS, deoxycholate, crystal violet and benzalkonium. In Escherichia coli (strain K12), this protein is Multidrug resistance protein MdtE (mdtE).